The following is a 190-amino-acid chain: Ribose 1,5-bisphosphate phosphokinase PhnN (190 aa).

Gly11–Asp18 is an ATP binding site.

It belongs to the ribose 1,5-bisphosphokinase family.

It carries out the reaction alpha-D-ribose 1,5-bisphosphate + ATP = 5-phospho-alpha-D-ribose 1-diphosphate + ADP. The protein operates within metabolic intermediate biosynthesis; 5-phospho-alpha-D-ribose 1-diphosphate biosynthesis; 5-phospho-alpha-D-ribose 1-diphosphate from D-ribose 5-phosphate (route II): step 3/3. In terms of biological role, catalyzes the phosphorylation of ribose 1,5-bisphosphate to 5-phospho-D-ribosyl alpha-1-diphosphate (PRPP). The sequence is that of Ribose 1,5-bisphosphate phosphokinase PhnN from Thiobacillus denitrificans (strain ATCC 25259 / T1).